We begin with the raw amino-acid sequence, 205 residues long: Probable anaerobic dimethyl sulfoxide reductase chain YnfG (205 aa).

4Fe-4S ferredoxin-type domains are found at residues 5 to 33 (YGFFIDSSRCTGCKTCELACKDFKDLGPE), 59 to 89 (FAYYLSISCNHCDDPACTKVCPSGAMHKRED), and 90 to 119 (GFVVVDEDVCIGCRYCHMACPYGAPQYNAE). The [4Fe-4S] cluster site is built by Cys-14, Cys-17, Cys-20, Cys-24, Cys-67, Cys-70, Cys-75, Cys-79, Cys-99, Cys-102, Cys-105, Cys-109, Cys-126, Cys-129, Cys-141, and Cys-145. The interval 183-205 (IKPNANSRPTGDTTGYLANPEEV) is disordered. The segment covering 186-195 (NANSRPTGDT) has biased composition (polar residues).

As to quaternary structure, the complex consists of three subunits: YnfF, the reductase; YnfG, an electron transfer protein, and YnfH, a membrane anchor protein. [4Fe-4S] cluster serves as cofactor.

Functionally, electron transfer subunit of the terminal reductase during anaerobic growth on various sulfoxide and N-oxide compounds. The sequence is that of Probable anaerobic dimethyl sulfoxide reductase chain YnfG (ynfG) from Escherichia coli O6:H1 (strain CFT073 / ATCC 700928 / UPEC).